Reading from the N-terminus, the 61-residue chain is UPF0391 membrane protein Pnap_0032 (61 aa).

2 helical membrane passes run 5 to 25 and 33 to 53; these read AIIF…GVAA and VLFG…ALGV.

It belongs to the UPF0391 family.

The protein resides in the cell membrane. This is UPF0391 membrane protein Pnap_0032 from Polaromonas naphthalenivorans (strain CJ2).